Reading from the N-terminus, the 204-residue chain is Thymidine kinase (204 aa).

Residues 15–22 (GSMFSGKS) and 88–91 (DEVQ) contribute to the ATP site. Residue Glu-89 is the Proton acceptor of the active site. Positions 145, 148, 183, and 186 each coordinate Zn(2+).

The protein belongs to the thymidine kinase family. Homotetramer.

The protein resides in the cytoplasm. It carries out the reaction thymidine + ATP = dTMP + ADP + H(+). This is Thymidine kinase from Halalkalibacterium halodurans (strain ATCC BAA-125 / DSM 18197 / FERM 7344 / JCM 9153 / C-125) (Bacillus halodurans).